A 250-amino-acid chain; its full sequence is Urease accessory protein UreF (250 aa).

The segment at M1 to A21 is disordered. The span at A9–A21 shows a compositional bias: low complexity.

This sequence belongs to the UreF family. In terms of assembly, ureD, UreF and UreG form a complex that acts as a GTP-hydrolysis-dependent molecular chaperone, activating the urease apoprotein by helping to assemble the nickel containing metallocenter of UreC. The UreE protein probably delivers the nickel.

The protein resides in the cytoplasm. Required for maturation of urease via the functional incorporation of the urease nickel metallocenter. This is Urease accessory protein UreF from Methylobacterium sp. (strain 4-46).